The chain runs to 506 residues: Maturase K (506 aa).

The protein belongs to the intron maturase 2 family. MatK subfamily.

The protein localises to the plastid. It localises to the chloroplast. Usually encoded in the trnK tRNA gene intron. Probably assists in splicing its own and other chloroplast group II introns. The protein is Maturase K of Trifolium striatum (Knotted clover).